Consider the following 229-residue polypeptide: Cytochrome c oxidase subunit 2 (229 aa).

Residues 1–14 are Mitochondrial intermembrane-facing; sequence MANHLQFNFQDATS. A helical membrane pass occupies residues 15–45; that stretch reads PLMQELVKFHDHSLTILFFISALILYVLMMT. At 46–59 the chain is on the mitochondrial matrix side; it reads SLSKLTNKNILDSQ. Residues 60-87 traverse the membrane as a helical segment; that stretch reads EIEMVWTVIPAFILIMLALPSIQILYLM. The Mitochondrial intermembrane segment spans residues 88 to 229; it reads DEIASPDITI…FESWIIKLSL (142 aa). The Cu cation site is built by His-162, Cys-197, Glu-199, Cys-201, His-205, and Met-208. Glu-199 is a binding site for Mg(2+).

Belongs to the cytochrome c oxidase subunit 2 family. As to quaternary structure, component of the cytochrome c oxidase (complex IV, CIV), a multisubunit enzyme composed of 14 subunits. The complex is composed of a catalytic core of 3 subunits MT-CO1, MT-CO2 and MT-CO3, encoded in the mitochondrial DNA, and 11 supernumerary subunits COX4I, COX5A, COX5B, COX6A, COX6B, COX6C, COX7A, COX7B, COX7C, COX8 and NDUFA4, which are encoded in the nuclear genome. The complex exists as a monomer or a dimer and forms supercomplexes (SCs) in the inner mitochondrial membrane with NADH-ubiquinone oxidoreductase (complex I, CI) and ubiquinol-cytochrome c oxidoreductase (cytochrome b-c1 complex, complex III, CIII), resulting in different assemblies (supercomplex SCI(1)III(2)IV(1) and megacomplex MCI(2)III(2)IV(2)). Found in a complex with TMEM177, COA6, COX18, COX20, SCO1 and SCO2. Interacts with TMEM177 in a COX20-dependent manner. Interacts with COX20. Interacts with COX16. Requires Cu cation as cofactor.

The protein resides in the mitochondrion inner membrane. It catalyses the reaction 4 Fe(II)-[cytochrome c] + O2 + 8 H(+)(in) = 4 Fe(III)-[cytochrome c] + 2 H2O + 4 H(+)(out). Functionally, component of the cytochrome c oxidase, the last enzyme in the mitochondrial electron transport chain which drives oxidative phosphorylation. The respiratory chain contains 3 multisubunit complexes succinate dehydrogenase (complex II, CII), ubiquinol-cytochrome c oxidoreductase (cytochrome b-c1 complex, complex III, CIII) and cytochrome c oxidase (complex IV, CIV), that cooperate to transfer electrons derived from NADH and succinate to molecular oxygen, creating an electrochemical gradient over the inner membrane that drives transmembrane transport and the ATP synthase. Cytochrome c oxidase is the component of the respiratory chain that catalyzes the reduction of oxygen to water. Electrons originating from reduced cytochrome c in the intermembrane space (IMS) are transferred via the dinuclear copper A center (CU(A)) of subunit 2 and heme A of subunit 1 to the active site in subunit 1, a binuclear center (BNC) formed by heme A3 and copper B (CU(B)). The BNC reduces molecular oxygen to 2 water molecules using 4 electrons from cytochrome c in the IMS and 4 protons from the mitochondrial matrix. This Myxine glutinosa (Atlantic hagfish) protein is Cytochrome c oxidase subunit 2 (MT-CO2).